The chain runs to 156 residues: Aspartate carbamoyltransferase regulatory chain (156 aa).

Zn(2+) is bound by residues cysteine 107, cysteine 112, cysteine 137, and cysteine 140.

The protein belongs to the PyrI family. In terms of assembly, contains catalytic and regulatory chains. The cofactor is Zn(2+).

In terms of biological role, involved in allosteric regulation of aspartate carbamoyltransferase. This is Aspartate carbamoyltransferase regulatory chain from Methanopyrus kandleri (strain AV19 / DSM 6324 / JCM 9639 / NBRC 100938).